The sequence spans 334 residues: Ficolin-1 (334 aa).

An N-terminal signal peptide occupies residues 1–17 (MQWPTLWAFSGLLCLCP). The tract at residues 47–117 (SCPGFPGPPG…SLGEKELGDT (71 aa)) is disordered. The region spanning 50–88 (GFPGPPGPKGEPGSPAGRGERGFQGSPGKMGPAGSKGEP) is the Collagen-like domain. Positions 117–334 (TLCQRGPRSC…KVAEMKIRAS (218 aa)) constitute a Fibrinogen C-terminal domain. 2 disulfide bridges follow: C119-C147 and C126-C154. Residues 123–162 (PRSCKDLLTRGIFLTGWYTIHLPDCRPLTVLCDMDVDGGG) are a domain; contributes to trimerization. Positions 163-251 (WTVFQRRVDG…LTLGQFLEGT (89 aa)) are b domain; contributes to trimerization. An N-linked (GlcNAc...) asparagine glycan is attached at N261. Ca(2+) contacts are provided by D270 and D272. Cysteines 278 and 291 form a disulfide. 290-292 (NCH) contributes to the a carbohydrate binding site. Residues 325 to 334 (KVAEMKIRAS) are p domain.

Belongs to the ficolin lectin family. As to quaternary structure, homotrimer. Interacts with elastin/ELN. Interacts (via Fibrinogen C-terminal domain) with FFAR2. Interacts with CRP; may regulate monocyte activation by FCN1. Highly expressed in liver and spleen.

Its subcellular location is the secreted. The protein localises to the cell membrane. In terms of biological role, extracellular lectin functioning as a pattern-recognition receptor in innate immunity. Binds the sugar moieties of pathogen-associated molecular patterns (PAMPs) displayed on microbes and activates the lectin pathway of the complement system. May also activate monocytes through a G protein-coupled receptor, FFAR2, inducing the secretion of interleukin-8/IL-8. Binds preferentially to 9-O-acetylated 2-6-linked sialic acid derivatives and to various glycans containing sialic acid engaged in a 2-3 linkage. The polypeptide is Ficolin-1 (Fcn1) (Mus musculus (Mouse)).